A 211-amino-acid polypeptide reads, in one-letter code: Dual specificity protein phosphatase 26 (211 aa).

One can recognise a Tyrosine-protein phosphatase domain in the interval 60–207; it reads NHADEVWPGL…LLALDRRLRQ (148 aa). The Phosphocysteine intermediate role is filled by cysteine 152.

The protein belongs to the protein-tyrosine phosphatase family. Non-receptor class dual specificity subfamily. Interacts with HSF4.

It localises to the cytoplasm. The protein resides in the nucleus. It is found in the golgi apparatus. The catalysed reaction is O-phospho-L-tyrosyl-[protein] + H2O = L-tyrosyl-[protein] + phosphate. It carries out the reaction O-phospho-L-seryl-[protein] + H2O = L-seryl-[protein] + phosphate. It catalyses the reaction O-phospho-L-threonyl-[protein] + H2O = L-threonyl-[protein] + phosphate. Inactivates MAPK1 and MAPK3 which leads to dephosphorylation of heat shock factor protein 4 and a reduction in its DNA-binding activity. The sequence is that of Dual specificity protein phosphatase 26 (DUSP26) from Bos taurus (Bovine).